The chain runs to 255 residues: Electron transfer flavoprotein subunit beta (255 aa).

N-acetylalanine is present on Ala2. AMP is bound by residues Ala9, 39–42 (NPFC), Cys66, and 123–134 (GKQAIDDDCNQT). Residues 183–205 (ADLRLNEPRYATLPNIMKAKKKK) form a recognition loop region. N6,N6,N6-trimethyllysine; by ETFBKMT; alternate is present on Lys200. Lys200 is subject to N6-acetyllysine; alternate. N6-methyllysine; alternate is present on Lys200. Lys203 is subject to N6,N6,N6-trimethyllysine; by ETFBKMT. At Lys210 the chain carries N6-acetyllysine; alternate. Residue Lys210 is modified to N6-succinyllysine; alternate. Phosphoserine occurs at positions 223 and 226. The residue at position 238 (Lys238) is an N6-acetyllysine. Lys248 bears the N6-acetyllysine; alternate mark. Residue Lys248 is modified to N6-succinyllysine; alternate.

It belongs to the ETF beta-subunit/FixA family. Heterodimer composed of ETFA and ETFB. Identified in a complex that contains ETFA, ETFB and ETFRF1. Interacts with ACADM. In terms of processing, methylated. Trimethylation at Lys-200 and Lys-203 may negatively regulate the activity in electron transfer from acyl-CoA dehydrogenases.

It is found in the mitochondrion matrix. Heterodimeric electron transfer flavoprotein that accepts electrons from several mitochondrial dehydrogenases, including acyl-CoA dehydrogenases, glutaryl-CoA and sarcosine dehydrogenase. It transfers the electrons to the main mitochondrial respiratory chain via ETF-ubiquinone oxidoreductase. Required for normal mitochondrial fatty acid oxidation and normal amino acid metabolism. ETFB binds an AMP molecule that probably has a purely structural role. In Mus musculus (Mouse), this protein is Electron transfer flavoprotein subunit beta.